A 1488-amino-acid polypeptide reads, in one-letter code: Chromosome partition protein MukB (1488 aa).

Residue 34 to 41 (GGNGAGKS) coordinates ATP. Coiled-coil stretches lie at residues 326-418 (LEAD…QYNQ), 444-472 (LDTF…QTAH), and 509-602 (RHLA…QRAP). Positions 666–783 (PGGAEDQRLN…SLPIFGRAAR (118 aa)) are flexible hinge. Coiled coils occupy residues 835–923 (EAEI…AKLE), 977–1116 (EMLS…AKAG), and 1209–1265 (VEAI…LQSV). Residues 1049 to 1074 (ADSGAEERARQRRDELHAQLSNNRSR) form a disordered region. Over residues 1051-1065 (SGAEERARQRRDELH) the composition is skewed to basic and acidic residues.

This sequence belongs to the SMC family. MukB subfamily. In terms of assembly, homodimerization via its hinge domain. Binds to DNA via its C-terminal region. Interacts, and probably forms a ternary complex, with MukE and MukF via its C-terminal region. The complex formation is stimulated by calcium or magnesium. Interacts with tubulin-related protein FtsZ.

It is found in the cytoplasm. Its subcellular location is the nucleoid. Functionally, plays a central role in chromosome condensation, segregation and cell cycle progression. Functions as a homodimer, which is essential for chromosome partition. Involved in negative DNA supercoiling in vivo, and by this means organize and compact chromosomes. May achieve or facilitate chromosome segregation by condensation DNA from both sides of a centrally located replisome during cell division. This chain is Chromosome partition protein MukB, found in Salmonella enteritidis PT4 (strain P125109).